The chain runs to 470 residues: uncharacterized protein (470 aa).

A coiled-coil region spans residues 418 to 453 (SECCEEQEEKEKKKEKEKEKKKEKDDDDDQQNNNNN). Residues 423–470 (EQEEKEKKKEKEKEKKKEKDDDDDQQNNNNNDQNGLGLGLGLNFGLNL) form a disordered region. Over residues 426-441 (EKEKKKEKEKEKKKEK) the composition is skewed to basic and acidic residues. Positions 448–457 (QNNNNNDQNG) are enriched in low complexity.

This is an uncharacterized protein from Acidianus bottle-shaped virus (isolate Italy/Pozzuoli) (ABV).